A 358-amino-acid chain; its full sequence is Trace amine-associated receptor 7e (358 aa).

Residues 1–47 lie on the Extracellular side of the membrane; sequence MATGDDSFLWDQDSILSRDLFSATSAELCYENLNRSCVRSPYSPGPR. Asn-34 carries an N-linked (GlcNAc...) asparagine glycan. Intrachain disulfides connect Cys-37–Cys-201 and Cys-120–Cys-205. A helical transmembrane segment spans residues 48–68; sequence LILYAVFGFGAVLAVCGNLLV. Residues 69 to 83 are Cytoplasmic-facing; sequence MTSILHFRQLHSPAN. The chain crosses the membrane as a helical span at residues 84–104; the sequence is FLVASLACADFLVGLTVMPFS. Residues 105–121 lie on the Extracellular side of the membrane; that stretch reads TVRSVEGCWYFGEIYCK. A helical transmembrane segment spans residues 122–143; it reads LHTCFDVSFCSSSIFHLCFISV. The Cytoplasmic portion of the chain corresponds to 144 to 166; the sequence is DRYIAVSDPLIYPTRFTASVSNK. The chain crosses the membrane as a helical span at residues 167–187; it reads CITFSWLLSISYGFSLIYTGA. Residues 188-212 lie on the Extracellular side of the membrane; the sequence is SEAGLEDLVSALTCVGGCQLAVNQS. Residue Asn-210 is glycosylated (N-linked (GlcNAc...) asparagine). Residues 213–233 form a helical membrane-spanning segment; it reads WVFINFLLFLIPTLVMITVYS. The Cytoplasmic portion of the chain corresponds to 234-274; the sequence is KIFLIAKQQAQNIEKMSKQTARASDSYKDRVAKRERKAAKT. Residues 275-295 traverse the membrane as a helical segment; that stretch reads LGIAVAAFLLSWLPYFIDSFI. At 296 to 309 the chain is on the extracellular side; sequence DAFLGFITPTYVYE. A helical membrane pass occupies residues 310–333; the sequence is ILVWIAYYNSAMNPLIYAFFYPWF. Topologically, residues 334 to 358 are cytoplasmic; that stretch reads RKAIKLTVTGKILRENSSTTNLFPE.

It belongs to the G-protein coupled receptor 1 family. In terms of tissue distribution, specifically expressed in neurons of the olfactory epithelium.

It localises to the cell membrane. Functionally, olfactory receptor specific for N,N-dimethylalkylamines trace amines. Trace amine compounds are enriched in animal body fluids and act on trace amine-associated receptors (TAARs) to elicit both intraspecific and interspecific innate behaviors. Ligand-binding causes a conformation change that triggers signaling via G(s)-class of G alpha proteins (GNAL or GNAS). In Mus musculus (Mouse), this protein is Trace amine-associated receptor 7e.